The following is a 499-amino-acid chain: Serine/threonine-protein phosphatase 5 (499 aa).

The disordered stretch occupies residues 1–23; it reads MAMAEGERTECAEPPRDEPPAEG. A2 is subject to N-acetylalanine. TPR repeat units lie at residues 28–61, 62–95, and 96–129; these read AEEL…NPSN, AIYY…DKKY, and IKGY…KPND. Positions 200 to 499 are catalytic; it reads DQKKLHRKCA…ANTLLQLGMM (300 aa). Residues D242, H244, and D271 each coordinate Mg(2+). Residue H244 coordinates substrate. Residues R275 and 303–304 contribute to the substrate site; that span reads NH. Residue N303 coordinates Mg(2+). Catalysis depends on H304, which acts as the Proton donor/acceptor. Residue H352 coordinates Mg(2+). 2 residues coordinate substrate: R400 and H427. Mg(2+) is bound at residue H427. Positions 495 to 499 are required for autoinhibition; it reads QLGMM.

This sequence belongs to the PPP phosphatase family. PP-5 (PP-T) subfamily. In terms of assembly, probably forms a complex composed of chaperones HSP90 and HSP70, co-chaperones STIP1/HOP, CDC37, PPP5C, PTGES3/p23, TSC1 and client protein TSC2. Probably forms a complex composed of chaperones HSP90 and HSP70, co-chaperones CDC37, PPP5C, TSC1 and client protein TSC2, CDK4, AKT, RAF1 and NR3C1; this complex does not contain co-chaperones STIP1/HOP and PTGES3/p23. Part of a complex with HSP90/HSP90AA1 and steroid receptors. Interacts (via TPR repeats) with HSP90AA1 (via TPR repeat-binding motif) or HSPA1A/HSPA1B; the interaction is direct and activates the phosphatase activity. Dissociates from HSPA1A/HSPA1B and HSP90AA1 in response to arachidonic acid. Interacts with CPNE1 (via VWFA domain). Interacts with CDC16, CDC27. Interacts with KLHDC10 (via the 6 Kelch repeats); inhibits the phosphatase activity on MAP3K5. Interacts with ATM and ATR; both interactions are induced by DNA damage and enhance ATM and ATR kinase activity. Interacts with RAD17; reduced by DNA damage. Interacts with nuclear receptors such as NR3C1/GCR and PPARG (activated by agonist); regulates their transactivation activities. Interacts (via TPR repeats) with S100 proteins S100A1, S100A2, S100A6, S100B and S100P; the interactions are calcium-dependent, strongly activate PPP5C phosphatase activity and compete with HSP90AA1 and MAP3K5 interactions. Interacts with SMAD2 and SMAD3 but not with SMAD1; decreases SMAD3 phosphorylation and protein levels. Interacts (via TPR repeats) with CRY1 and CRY2; the interaction with CRY2 down-regulates the phosphatase activity on CSNK1E. Interacts (via TPR repeats) with the active form of RAC1, GNA12 or GNA13; these interactions activate the phosphatase activity and translocate PPP5C to the cell membrane. Interacts with FLCN. The cofactor is Mg(2+). It depends on Mn(2+) as a cofactor. In terms of processing, activated by at least two different proteolytic cleavages producing a 56 kDa and a 50 kDa form. In terms of tissue distribution, predominantly found in brain and, in lower levels, in testis, but was nearly undetectable in spleen, lung, skeletal muscle, kidney and liver.

The protein localises to the nucleus. It is found in the cytoplasm. The protein resides in the cell membrane. It catalyses the reaction O-phospho-L-seryl-[protein] + H2O = L-seryl-[protein] + phosphate. The enzyme catalyses O-phospho-L-threonyl-[protein] + H2O = L-threonyl-[protein] + phosphate. Its activity is regulated as follows. Autoinhibited. In the autoinhibited state, the TPR domain interacts with the catalytic region and prevents substrate access to the catalytic pocket. Allosterically activated by various polyunsaturated fatty acids, free long-chain fatty-acids and long-chain fatty acyl-CoA esters, arachidonic acid being the most effective activator. HSP90A and probably RAC1, GNA12 and GNA13 can also release the autoinhibition by the TPR repeat. Activation by RAC1, GNA12 and GNA13 is synergistic with the one produced by fatty acids binding. Inhibited by okadaic acid. Serine/threonine-protein phosphatase that dephosphorylates a myriad of proteins involved in different signaling pathways including the kinases CSNK1E, ASK1/MAP3K5, PRKDC and RAF1, the nuclear receptors NR3C1, PPARG, ESR1 and ESR2, SMAD proteins and TAU/MAPT. Implicated in wide ranging cellular processes, including apoptosis, differentiation, DNA damage response, cell survival, regulation of ion channels or circadian rhythms, in response to steroid and thyroid hormones, calcium, fatty acids, TGF-beta as well as oxidative and genotoxic stresses. Participates in the control of DNA damage response mechanisms such as checkpoint activation and DNA damage repair through, for instance, the regulation ATM/ATR-signaling and dephosphorylation of PRKDC and TP53BP1. Inhibits ASK1/MAP3K5-mediated apoptosis induced by oxidative stress. Plays a positive role in adipogenesis, mainly through the dephosphorylation and activation of PPARG transactivation function. Also dephosphorylates and inhibits the anti-adipogenic effect of NR3C1. Regulates the circadian rhythms, through the dephosphorylation and activation of CSNK1E. May modulate TGF-beta signaling pathway by the regulation of SMAD3 phosphorylation and protein expression levels. Dephosphorylates and may play a role in the regulation of TAU/MAPT. Through their dephosphorylation, may play a role in the regulation of ions channels such as KCNH2. Dephosphorylate FNIP1, disrupting interaction with HSP90AA1/Hsp90. The protein is Serine/threonine-protein phosphatase 5 (Ppp5c) of Rattus norvegicus (Rat).